We begin with the raw amino-acid sequence, 974 residues long: Cell division control protein 15 (974 aa).

Residues 25–272 form the Protein kinase domain; it reads YHLKQVIGRG…ADQLLKHVWI (248 aa). ATP is bound by residues 31–39 and lysine 54; that span reads IGRGSYGVV. The active-site Proton acceptor is aspartate 146. Residues 360 to 702 are self association domain; sequence CSLENIADTI…ITAICVEMSL (343 aa). The segment covering 554–563 has biased composition (low complexity); that stretch reads SSSLPLSSSP. The segment at 554-592 is disordered; sequence SSSLPLSSSPTRNSPVNSVQSPSRSPVHSLMATRPSSPM. Serine 561 and serine 567 each carry phosphoserine. Positions 564–579 are enriched in polar residues; it reads TRNSPVNSVQSPSRSP. Residues 751–974 are auto-inhibitory domain; that stretch reads TVGSSESHSV…FSVPITTFQT (224 aa). A Phosphothreonine modification is found at threonine 870. Residues 941 to 974 are disordered; sequence AAIGSSPTKDERSNLRSSKDKSDGFSVPITTFQT. A compositionally biased stretch (basic and acidic residues) spans 948 to 963; that stretch reads TKDERSNLRSSKDKSD.

This sequence belongs to the protein kinase superfamily. Ser/Thr protein kinase family. As to quaternary structure, homodimer. Interacts with TEM1. In terms of processing, phosphorylation by CDK1 reduces the binding to the mother spindle pole body. The extent of phosphorylation gradually increases during cell-cycle progression until some point during late anaphase/telophase when it is rapidly dephosphorylated by CDC14. Phosphorylation inhibits kinase activity and dephosphorylation by CDC14 activates CDC15.

It localises to the cytoplasm. The protein resides in the cytoskeleton. It is found in the spindle pole. Its subcellular location is the bud neck. The catalysed reaction is L-seryl-[protein] + ATP = O-phospho-L-seryl-[protein] + ADP + H(+). It catalyses the reaction L-threonyl-[protein] + ATP = O-phospho-L-threonyl-[protein] + ADP + H(+). With respect to regulation, kinase activity is inhibited by phosphorylation and activated by dephosphorylation by CDC14. Functionally, protein kinase of the mitotic exit network (MEN) essential for late nuclear division in the mitotic cycle. Promotes mitotic exit by phosphorylating DBF2 and directly switching on DBF2 kinase activity. Involved in the localization of DBF2 and DBF20 to the neck which is necessary to undergo cytokinesis. Plays a role in segregation of chromosomes during recovery from spindle checkpoint activation. Required for spindle pole localization of CDK1 and inactivation of CDC2 kinase activity at the end of mitosis. Required for spindle disassembly after meiosis II and plays a role in spore morphogenesis. The sequence is that of Cell division control protein 15 (CDC15) from Saccharomyces cerevisiae (strain ATCC 204508 / S288c) (Baker's yeast).